An 83-amino-acid polypeptide reads, in one-letter code: Small ribosomal subunit protein uS17 (83 aa).

The protein belongs to the universal ribosomal protein uS17 family. Part of the 30S ribosomal subunit.

Functionally, one of the primary rRNA binding proteins, it binds specifically to the 5'-end of 16S ribosomal RNA. The sequence is that of Small ribosomal subunit protein uS17 from Ehrlichia chaffeensis (strain ATCC CRL-10679 / Arkansas).